The primary structure comprises 106 residues: Protein U4 (106 aa).

The helical transmembrane segment at 5–25 (FFISIILFVVLLNPSLIINMV) threads the bilayer.

Belongs to the nanovirus U4 protein family.

Its subcellular location is the membrane. The polypeptide is Protein U4 (DNA-U4) (Cicer arietinum (Chickpea)).